Here is a 388-residue protein sequence, read N- to C-terminus: Succinate--CoA ligase [ADP-forming] subunit beta (388 aa).

Residues lysine 9–histidine 244 enclose the ATP-grasp domain. Residues lysine 46, glycine 53–glycine 55, glutamate 99, threonine 102, and glutamate 107 each bind ATP. Asparagine 199 and aspartate 213 together coordinate Mg(2+). Residues asparagine 264 and glycine 321 to valine 323 each bind substrate.

The protein belongs to the succinate/malate CoA ligase beta subunit family. As to quaternary structure, heterotetramer of two alpha and two beta subunits. It depends on Mg(2+) as a cofactor.

The enzyme catalyses succinate + ATP + CoA = succinyl-CoA + ADP + phosphate. The catalysed reaction is GTP + succinate + CoA = succinyl-CoA + GDP + phosphate. Its pathway is carbohydrate metabolism; tricarboxylic acid cycle; succinate from succinyl-CoA (ligase route): step 1/1. Succinyl-CoA synthetase functions in the citric acid cycle (TCA), coupling the hydrolysis of succinyl-CoA to the synthesis of either ATP or GTP and thus represents the only step of substrate-level phosphorylation in the TCA. The beta subunit provides nucleotide specificity of the enzyme and binds the substrate succinate, while the binding sites for coenzyme A and phosphate are found in the alpha subunit. This is Succinate--CoA ligase [ADP-forming] subunit beta from Pseudomonas fluorescens (strain Pf0-1).